The chain runs to 103 residues: UPF0145 protein BCE_1095 (103 aa).

The protein belongs to the UPF0145 family.

The chain is UPF0145 protein BCE_1095 from Bacillus cereus (strain ATCC 10987 / NRS 248).